The sequence spans 396 residues: MDDSKHILITKILKNEVTEALGCTEVGLIGYAVSLCNISDPFSIDKLELTLNNGSFKNAYAVGVPNTGKYGILPAVVGGLLGNSKNKLLIFNDITYSQELEDFIKEKLEIKVIDGPLFCNIKIKDNSGNYFESLIKDNHLNVVIPKIEKEKIDVEITTSEKGEYKNLELIDFLDYLDEIPEKIGKLVEKTVQTNKNLIKGDFLNYGTDILSIIVNKTTSACNTRMTGENMPAMSVAKSGNMGIMATLPIISYDSSTENNSEKLIKSVLLSMLVTIYSTYNSSYLSSMCGCVSKGGMGAVIGLCYYKNGKNLKKLDSSARTFTANLPGIICDGGKVGCALKLASGCFAAYSSLFVDISYENGIVGKDFKECVENISKISKAMGDLDCDIVEIMSKKM.

Residue C23 is the Proton acceptor of the active site. 3 residues coordinate [4Fe-4S] cluster: C288, C330, and C337.

This sequence belongs to the L-cysteine desulfidase family. Homotrimer. [4Fe-4S] cluster serves as cofactor.

It catalyses the reaction L-cysteine + H2O = hydrogen sulfide + pyruvate + NH4(+) + H(+). In terms of biological role, catalyzes the cleavage of L-cysteine to form 2-aminoprop-2-enoate and sulfide. The former then spontaneously hydrolyzes to pyruvate and NH(3). May be responsible for the production of sulfide required for the biosynthesis of iron-sulfur centers in this archaea. The chain is L-cysteine desulfidase from Methanococcus maripaludis (strain C6 / ATCC BAA-1332).